Reading from the N-terminus, the 482-residue chain is FAD-linked oxidoreductase alt4 (482 aa).

The FAD-binding PCMH-type domain occupies 53-211 (ERPTYLAIVD…LEATFQVYPQ (159 aa)).

The protein belongs to the oxygen-dependent FAD-linked oxidoreductase family. FAD serves as cofactor.

The protein operates within secondary metabolite biosynthesis. FAD-linked oxidoreductase; part of the gene cluster that mediates the biosynthesis of alternapyrone derivatives. Alternapyrone is a decaketide with octa-methylation from methionine on every C2 unit except the third unit. All the domains in the polyketide synthase alt5 are apparently involved in alternapyrone synthesis, that is, the 8 CMeT, 7 KR, 7 DH, and 4 ER reactions in the 9 KS-mediated condensation steps required for alternapyrone synthesis. the alternapyrone produced by alt5 might be intensively modified by cytochrome P450 monooxygenases alt1, alt2 and alt3 and FAD-dependent oxidoreductase alt4 present in the alt gene cluster. The protein is FAD-linked oxidoreductase alt4 of Alternaria solani.